The following is a 236-amino-acid chain: Bax inhibitor 1 (236 aa).

At 1–29 the chain is on the cytoplasmic side; sequence MNIFDRKINFDALFKFSHITPSTQQHLKK. Lys-7 participates in a covalent cross-link: Glycyl lysine isopeptide (Lys-Gly) (interchain with G-Cter in ubiquitin). The chain crosses the membrane as a helical span at residues 30–50; it reads VYASFALCMFVAAAGAYIHVV. Topologically, residues 51-52 are lumenal; sequence TH. The helical transmembrane segment at 53-73 threads the bilayer; that stretch reads FIQAGLLSALGSLGLMIWLMA. The Cytoplasmic portion of the chain corresponds to 74-86; sequence TPHSHETEQKRLG. Residues 87–107 traverse the membrane as a helical segment; that stretch reads LLAGFAFLTGVGLGPALDLCI. Residues 108–112 are Lumenal-facing; that stretch reads AINPS. A helical transmembrane segment spans residues 113–133; that stretch reads ILPTAFMGTAMIFTCFTLSAL. Over 134–139 the chain is Cytoplasmic; sequence YARRRS. The chain crosses the membrane as a helical span at residues 140-160; the sequence is YLFLGGILMSAMSLMLLSSLG. At 161–166 the chain is on the lumenal side; that stretch reads NLFFGS. Residues 167-187 traverse the membrane as a helical segment; sequence VWLFQANLYMGLVVMCGFVLF. The Cytoplasmic segment spans residues 188 to 206; that stretch reads DTQLIIEKAENGDKDYIWH. The segment at residues 207-227 is an intramembrane region (helical); that stretch reads CVDLFLDFVTLFRKLMMILAM. Residues 228–236 lie on the Cytoplasmic side of the membrane; it reads NEKDKKKKK.

This sequence belongs to the BI1 family. As to quaternary structure, interacts with BCL2 and BCL2L1. Interacts with ERN1. Ubiquitinated by BFAR, leading to proteasomal degradation.

The protein resides in the endoplasmic reticulum membrane. Functionally, endoplasmic reticulum (ER)-resident protein that confers cellular protection as an anti-apoptotic protein by limiting multiple stress-inducing pathways surrounding the endoplasmic reticulum and mitochondria. Inhibits the activities of the key sensor for the endoplasmic reticulum unfolded protein response IRE1alpha/ERN1 both directly and by blocking BAX/BAK binding. Modulates ER calcium homeostasis by acting as a calcium-leak channel. Negatively regulates autophagy and autophagosome formation, especially during periods of nutrient deprivation, and reduces cell survival during starvation. In Bos taurus (Bovine), this protein is Bax inhibitor 1 (TMBIM6).